The following is a 132-amino-acid chain: Large ribosomal subunit protein bL17 (132 aa).

It belongs to the bacterial ribosomal protein bL17 family. As to quaternary structure, part of the 50S ribosomal subunit. Contacts protein L32.

This chain is Large ribosomal subunit protein bL17, found in Cellvibrio japonicus (strain Ueda107) (Pseudomonas fluorescens subsp. cellulosa).